The following is a 228-amino-acid chain: Cytidylate kinase (228 aa).

10-18 (GPSGSGKGT) contributes to the ATP binding site.

Belongs to the cytidylate kinase family. Type 1 subfamily.

The protein localises to the cytoplasm. The catalysed reaction is CMP + ATP = CDP + ADP. It catalyses the reaction dCMP + ATP = dCDP + ADP. The sequence is that of Cytidylate kinase from Acinetobacter baumannii (strain SDF).